Reading from the N-terminus, the 196-residue chain is Holliday junction branch migration complex subunit RuvA (196 aa).

The segment at 1–62 (MYEYINGLIT…ENDISLYGFI (62 aa)) is domain I. The domain II stretch occupies residues 63–141 (DADEKALFNK…ELASKTGMVD (79 aa)). Residues 142 to 148 (SSSNPEQ) form a flexible linker region. The domain III stretch occupies residues 148-196 (QSQALDDALEALLALGYTAKDVKAVAQIIGRNSDTTDGYIRSALKLLVK).

The protein belongs to the RuvA family. In terms of assembly, homotetramer. Forms an RuvA(8)-RuvB(12)-Holliday junction (HJ) complex. HJ DNA is sandwiched between 2 RuvA tetramers; dsDNA enters through RuvA and exits via RuvB. An RuvB hexamer assembles on each DNA strand where it exits the tetramer. Each RuvB hexamer is contacted by two RuvA subunits (via domain III) on 2 adjacent RuvB subunits; this complex drives branch migration. In the full resolvosome a probable DNA-RuvA(4)-RuvB(12)-RuvC(2) complex forms which resolves the HJ.

It is found in the cytoplasm. Functionally, the RuvA-RuvB-RuvC complex processes Holliday junction (HJ) DNA during genetic recombination and DNA repair, while the RuvA-RuvB complex plays an important role in the rescue of blocked DNA replication forks via replication fork reversal (RFR). RuvA specifically binds to HJ cruciform DNA, conferring on it an open structure. The RuvB hexamer acts as an ATP-dependent pump, pulling dsDNA into and through the RuvAB complex. HJ branch migration allows RuvC to scan DNA until it finds its consensus sequence, where it cleaves and resolves the cruciform DNA. The polypeptide is Holliday junction branch migration complex subunit RuvA (Leuconostoc mesenteroides subsp. mesenteroides (strain ATCC 8293 / DSM 20343 / BCRC 11652 / CCM 1803 / JCM 6124 / NCDO 523 / NBRC 100496 / NCIMB 8023 / NCTC 12954 / NRRL B-1118 / 37Y)).